Here is a 356-residue protein sequence, read N- to C-terminus: Serine/arginine-rich splicing factor RS41 (356 aa).

RRM domains lie at 2–74 (KPVF…WTKN) and 96–167 (KTLF…YAVK). Positions 73 to 92 (KNDRGGAGRSGGSRRSSSGL) are disordered. Residues 168-186 (DDDSRGNGYSPERRRDRSP) show a composition bias toward basic and acidic residues. Residues 168–356 (DDDSRGNGYS…SPSRSPPAEE (189 aa)) are disordered. Residues Ser192, Ser194, Ser210, Ser239, Ser254, and Ser274 each carry the phosphoserine modification. The span at 238–253 (LSPDYKRDDRRRERVA) shows a compositional bias: basic and acidic residues. A run of 3 repeats spans residues 267–278 (KGRGESRSPPPY), 279–290 (EKRRESRSPPPY), and 291–302 (EKRRESRSPPPY). Residues 267–307 (KGRGESRSPPPYEKRRESRSPPPYEKRRESRSPPPYEKRRE) form a 4 X 12 AA tandem repeats of [KE]-[GK]-R -[GR]-E-S-R-S-P-P-P-Y region. The span at 268–306 (GRGESRSPPPYEKRRESRSPPPYEKRRESRSPPPYEKRR) shows a compositional bias: basic and acidic residues. Residues 303–307 (EKRRE) form a 4; truncated repeat. Ser309, Ser324, Ser342, Ser347, and Ser351 each carry phosphoserine.

It belongs to the splicing factor SR family. RS subfamily. As to quaternary structure, component of the spliceosome. Interacts with RCF3 and CPL1. Interacts with DRB1/HYL1 and SE. In terms of tissue distribution, leaves, stem, roots and flowers.

It localises to the nucleus. It is found in the nucleus speckle. In terms of biological role, required for constitutive and alternative pre-mRNA splicing. Involved in primary miRNA processing and pri-miRNA biogenesis. Binds both intronless and intron-containing pri-miRNAs. This is Serine/arginine-rich splicing factor RS41 (RS41) from Arabidopsis thaliana (Mouse-ear cress).